The chain runs to 227 residues: MSTAIVVFSGGQDSTTCLIQALTHYDHVHCITFDYGQRHNQEIEVAKSVALDLGATSHKVMDVGLLNELAVSSLTRDNIPVSHELQENGLPNSFVPGRNILFLTLAGIYAYQLGAESVITGVCETDFSGYPDCRDEFVKSINQSLVLGMDRKLKIDTPLMWLNKAETWALADKYGKLDYVRNQTLTCYNGVIGDGCGDCPSCDLRKNGLDDYLANKESVMADLESKI.

Position 8 to 18 (8 to 18 (FSGGQDSTTCL)) interacts with ATP. Residues Cys187, Cys196, Cys199, and Cys202 each coordinate Zn(2+).

This sequence belongs to the QueC family. It depends on Zn(2+) as a cofactor.

It carries out the reaction 7-carboxy-7-deazaguanine + NH4(+) + ATP = 7-cyano-7-deazaguanine + ADP + phosphate + H2O + H(+). Its pathway is purine metabolism; 7-cyano-7-deazaguanine biosynthesis. Functionally, catalyzes the ATP-dependent conversion of 7-carboxy-7-deazaguanine (CDG) to 7-cyano-7-deazaguanine (preQ(0)). The protein is 7-cyano-7-deazaguanine synthase of Aliivibrio salmonicida (strain LFI1238) (Vibrio salmonicida (strain LFI1238)).